We begin with the raw amino-acid sequence, 262 residues long: Acyl-[acyl-carrier-protein]--UDP-N-acetylglucosamine O-acyltransferase (262 aa).

This sequence belongs to the transferase hexapeptide repeat family. LpxA subfamily. As to quaternary structure, homotrimer.

The protein resides in the cytoplasm. The catalysed reaction is a (3R)-hydroxyacyl-[ACP] + UDP-N-acetyl-alpha-D-glucosamine = a UDP-3-O-[(3R)-3-hydroxyacyl]-N-acetyl-alpha-D-glucosamine + holo-[ACP]. It participates in glycolipid biosynthesis; lipid IV(A) biosynthesis; lipid IV(A) from (3R)-3-hydroxytetradecanoyl-[acyl-carrier-protein] and UDP-N-acetyl-alpha-D-glucosamine: step 1/6. Functionally, involved in the biosynthesis of lipid A, a phosphorylated glycolipid that anchors the lipopolysaccharide to the outer membrane of the cell. The sequence is that of Acyl-[acyl-carrier-protein]--UDP-N-acetylglucosamine O-acyltransferase from Salmonella schwarzengrund (strain CVM19633).